Here is a 511-residue protein sequence, read N- to C-terminus: Trafficking protein particle complex subunit 13 homolog (511 aa).

This sequence belongs to the TRAPPC13 family.

In Dictyostelium discoideum (Social amoeba), this protein is Trafficking protein particle complex subunit 13 homolog.